The sequence spans 507 residues: MAEEQARHVKNGLECIRALKAEPIGSLAIGEAMAAWSEISDNPGQEQATCKEEEAGASGLSKPCLSAIGSTEGGAPRIRGQGSGESDDDTETLGFPSRNLQASSTGLQCYYVYDHSGEAVKGIQDADSIMVQSGLDGDSTLSGGDNESENSDVDIGEPDTEGYAITDRGPAPISMGFRASDVETAEGGEIHELLRLQSRGNNFPKLGKTLNVPPPPDPGRASTSETPIKKGTDARLASFGTEIASLLTDGATQCARKSPSEPSGPGAPAGNVPECVSNAALTQEWTPESGTTISPRSQNKGKGGDYYDDELFSDVQDIKTALAKIHEDNQKVISKLESLLLLKGEVESIKKQINKQNISISTLEGHLSSIMIAIPGLGKDPNDPTADVEINPDLKPIIGRDSGRALAEVLKKPVASRQLQGMTNGRTSSRGQLLKEFQLKPIGKKMSSAVGFVPDTGPASRSVIRSIIKSSRIEEDRKRYLMTLLDDIKGANDLAKFHQMLMKIIMK.

The segment at 1-48 is interaction with N0; the sequence is MAEEQARHVKNGLECIRALKAEPIGSLAIGEAMAAWSEISDNPGQEQA. 4 disordered regions span residues 40–98, 134–174, 201–231, and 251–305; these read SDNP…FPSR, GLDG…APIS, NNFP…IKKG, and ATQC…KGGD. S86 bears the Phosphoserine mark. The span at 134-145 shows a compositional bias: low complexity; sequence GLDGDSTLSGGD. A compositionally biased stretch (acidic residues) spans 146–160; that stretch reads NESENSDVDIGEPDT. S151 bears the Phosphoserine mark. Over residues 260-270 the composition is skewed to low complexity; sequence SEPSGPGAPAG. Positions 279–300 are enriched in polar residues; sequence AALTQEWTPESGTTISPRSQNK. Residues 304 to 376 are multimerization; sequence GDYYDDELFS…LSSIMIAIPG (73 aa). Interaction with the L polymerase stretches follow at residues 361–377 and 396–410; these read STLE…IPGL and PIIG…AEVL. A x domain (XD) region spans residues 457 to 507; it reads GPASRSVIRSIIKSSRIEEDRKRYLMTLLDDIKGANDLAKFHQMLMKIIMK. Positions 459-507 are interaction with the nucleocapsid (N-RNA); sequence ASRSVIRSIIKSSRIEEDRKRYLMTLLDDIKGANDLAKFHQMLMKIIMK.

The protein belongs to the morbillivirus P protein family. As to quaternary structure, homotetramer. Interacts (via multimerization domain and XD domain) with polymerase L; this interaction forms the polymerase L-P complex. Interacts (via N-terminus) with N0 (via Ncore); this interaction allows P to chaperon N0 to avoid N polymerization and non-specific RNA binding before encapsidation. Interacts (via C-terminus) with N-RNA template (via Ntail); this interaction maintains the P/L complex anchored to the nucleocapsid template during the sequential transcription. Interacts (via C-terminus) with protein C this interaction allows C to associate with the ribonucleocapsid. Post-translationally, phosphorylation on serines by host CK2 is necessary for the formation of viral factories.

Essential cofactor of the RNA polymerase L that plays a central role in the transcription and replication by forming the polymerase complex with RNA polymerase L and recruiting L to the genomic N-RNA template for RNA synthesis. Also plays a central role in the encapsidation of nascent RNA chains by forming the encapsidation complex with the nucleocapsid protein N (N-P complex). Acts as a chaperone for newly synthesized free N protein, so-called N0, allowing encapsidation of nascent RNA chains during replication. The nucleoprotein protein N prevents excessive phosphorylation of P, which leads to down-regulation of viral transcription/ replication. Participates, together with N, in the formation of viral factories (viroplasms), which are large inclusions in the host cytoplasm where replication takes place. This chain is Phosphoprotein (P/V), found in Homo sapiens (Human).